The chain runs to 789 residues: Homocitrate dehydratase, mitochondrial (789 aa).

The N-terminal 14 residues, 1-14 (MLSSANRFYIKRHL), are a transit peptide targeting the mitochondrion. Residues Q96 and 189–191 (DSH) contribute to the substrate site. Residues C385, C448, and C451 each coordinate [4Fe-4S] cluster. Residues R476, R481, K610, and 672–673 (AR) each bind substrate.

The protein belongs to the aconitase/IPM isomerase family. Requires [4Fe-4S] cluster as cofactor.

Its subcellular location is the mitochondrion. The enzyme catalyses (2R)-homocitrate = cis-homoaconitate + H2O. It participates in amino-acid biosynthesis; L-lysine biosynthesis via AAA pathway; L-alpha-aminoadipate from 2-oxoglutarate: step 2/5. In terms of biological role, catalyzes the reversible dehydration of (R)-homocitrate to cis-homoaconitate, a step in the alpha-aminoadipate pathway for lysine biosynthesis. The polypeptide is Homocitrate dehydratase, mitochondrial (ACO2) (Saccharomyces cerevisiae (strain ATCC 204508 / S288c) (Baker's yeast)).